Here is a 1244-residue protein sequence, read N- to C-terminus: Ras-specific guanine nucleotide-releasing factor 1 (1244 aa).

In terms of domain architecture, PH 1 spans Asp-22–Tyr-129. The residue at position 71 (Ser-71) is a Phosphoserine; by PLK2. Positions Lys-204 to Tyr-229 constitute an IQ domain. The region spanning Lys-240–Glu-426 is the DH domain. The PH 2 domain maps to Thr-456–Asp-582. Phosphoserine; by PLK2 occurs at positions 575 and 611. The N-terminal Ras-GEF domain occupies Lys-629 to Pro-743. A disordered region spans residues Gly-707 to Ser-730. A Phosphoserine modification is found at Ser-739. 2 positions are modified to phosphoserine; by PLK2: Ser-760 and Ser-781. The interval Thr-800–Arg-840 is disordered. The segment covering Glu-818 to Glu-830 has biased composition (acidic residues). Position 854 is a phosphoserine; by PLK2 (Ser-854). The Ras-GEF domain occupies Ser-1009 to Lys-1241.

As to quaternary structure, homooligomer and heterooligomer with RASGRF2. Interacts with USP8, thereby regulating its stability. In terms of processing, phosphorylated by PLK2, leading to ubiquitination and degradation by the proteasome. Ubiquitinated and degraded following phosphorylation by PLK2. Post-translationally, phosphorylated by SRC and LCK. Phosphorylation by LCK increases its capacity to stimulate the GDP/GTP exchange on Ras, whereas its phosphorylation by SRC seems not to have an effect on stimulation activity.

Its function is as follows. Promotes the exchange of Ras-bound GDP by GTP. This chain is Ras-specific guanine nucleotide-releasing factor 1 (Rasgrf1), found in Rattus norvegicus (Rat).